Here is a 570-residue protein sequence, read N- to C-terminus: Probable glucomannan 4-beta-mannosyltransferase 11 (570 aa).

The chain crosses the membrane as a helical span at residues 57–77 (LAMTVMILAEKLFVAAVCLAV). Aspartate 157 is an active-site residue. Aspartate 216 and aspartate 218 together coordinate substrate. Residue aspartate 310 is part of the active site. The next 4 helical transmembrane spans lie at 389–409 (IAAHTVTFIYYCFVIPVSVWL), 412–432 (IEIPLWGVVYVPTVITLCKAV), 522–542 (YSEIFVGICIILSGFYDVLYA), and 548–568 (IFLFIQGLAFLIVGFDYIGVC).

This sequence belongs to the glycosyltransferase 2 family. Plant cellulose synthase-like A subfamily.

It is found in the golgi apparatus membrane. It carries out the reaction GDP-mannose + (glucomannan)n = GDP + (glucomannan)n+1.. Functionally, probable mannan synthase which consists of a 4-beta-mannosyltransferase activity on mannan using GDP-mannose. The beta-1,4-mannan product is the backbone for galactomannan synthesis by galactomannan galactosyltransferase. Galactomannan is a noncellulosic polysaccharides of plant cell wall. This is Probable glucomannan 4-beta-mannosyltransferase 11 from Oryza sativa subsp. japonica (Rice).